The primary structure comprises 222 residues: MASFHIRQFQERDYEQVVDMFSRGMKEHIPTAFRHLLLLPRTLLLLLGVPLALVLVSGSWLLAVVCIFFLLPFLWFLAGQPWKNYVSKCLHTDMADITKSYLSDRGSGFWVAESGGQIVGTVGALPVKDPPSGRKQLQLFRLSVSSQHRGQGIAKALVRTVLQFARDQGYTDVVLVTGLLQQGAVTLYYSMGFQKTGESFMDILTWLVDVSLIHFIYPLPSS.

The Cytoplasmic portion of the chain corresponds to 1-35 (MASFHIRQFQERDYEQVVDMFSRGMKEHIPTAFRH). A helical; Signal-anchor for type II membrane protein transmembrane segment spans residues 36–56 (LLLLPRTLLLLLGVPLALVLV). Residues 57 to 222 (SGSWLLAVVC…IHFIYPLPSS (166 aa)) are Lumenal-facing. Residues 62 to 217 (LAVVCIFFLL…VDVSLIHFIY (156 aa)) enclose the N-acetyltransferase domain.

Belongs to the NAT8 family.

It is found in the endoplasmic reticulum-Golgi intermediate compartment membrane. The protein localises to the endoplasmic reticulum membrane. The catalysed reaction is L-lysyl-[protein] + acetyl-CoA = N(6)-acetyl-L-lysyl-[protein] + CoA + H(+). It catalyses the reaction an S-substituted L-cysteine + acetyl-CoA = an N-acetyl-L-cysteine-S-conjugate + CoA + H(+). Its pathway is sulfur metabolism; glutathione metabolism. Endoplasmic reticulum-membrane(ER)-bound lysine N-acetyltransferase catalyzing the N6-acetylation of lysine residues in the lumen of the ER in various proteins, including PROM1 and BACE1, using acetyl-CoA as acetyl donor. Thereby, may regulate apoptosis through the acetylation and the regulation of the expression of PROM1. May also regulate amyloid beta-peptide secretion through acetylation of BACE1 and the regulation of its expression in neurons. N(6)-lysine acetylation in the ER maintains protein homeostasis and regulates reticulophagy. Alternatively, acetylates the free alpha-amino group of cysteine S-conjugates to form mercapturic acids. This is the final step in a major route for detoxification of a wide variety of reactive electrophiles which starts with their incorporation into glutathione S-conjugates. The glutathione S-conjugates are then further processed into cysteine S-conjugates and finally mercapturic acids which are water soluble and can be readily excreted in urine or bile. This is N-acetyltransferase 8 (Nat8) from Rattus norvegicus (Rat).